Here is a 720-residue protein sequence, read N- to C-terminus: MAQGLEVALTDLQSSRNNVRHHTEEITVDHLLVRRGQAFNLTLYFRNRSFQPGLDNIIFVVETGPLPDLALGTRAVFSLARHHSPSPWIAWLETNGATSTEVSLCAPPTAAVGRYLLKIHIDSFQGSVTAYQLGEFILLFNPWCPEDAVYLDSEPQRQEYVMNDYGFIYQGSKNWIRPCPWNYGQFEDKIIDICLKLLDKSLHFQTDPATDCALRGSPVYVSRVVCAMINSNDDNGVLNGNWSENYTDGANPAEWTGSVAILKQWNATGCQPVRYGQCWVFAAVMCTVMRCLGIPTRVITNFDSGHDTDGNLIIDEYYDNTGRILGNKKKDTIWNFHVWNECWMARKDLPPAYGGWQVLDATPQEMSNGVYCCGPASVRAIKEGEVDLNYDTPFVFSMVNADCMSWLVQGGKEQKLHQDTSSVGNFISTKSIQSDERDDITENYKYEEGSLQERQVFLKALQKLKARSFHGSQRGAELQPSRPTSLSQDSPRSLHTPSLRPSDVVQVSLKFKLLDPPNMGQDICFVLLALNMSSQFKDLKVNLSAQSLLHDGSPLSPFWQDTAFITLSPKEAKTYPCKISYSQYSQYLSTDKLIRISALGEEKSSPEKILVNKIITLSYPSITINVLGAAVVNQPLSIQVIFSNPLSEQVEDCVLTVEGSGLFKKQQKVFLGVLKPQHQASIILETVPFKSGQRQIQANMRSNKFKDIKGYRNVYVDFAL.

Ala2 carries the post-translational modification N-acetylalanine. Residues Cys278, His337, and Asp360 contribute to the active site. Ca(2+) contacts are provided by Asn400, Asp402, Glu448, and Glu453. Residues 470–499 (HGSQRGAELQPSRPTSLSQDSPRSLHTPSL) are disordered. Positions 481-496 (SRPTSLSQDSPRSLHT) are enriched in polar residues.

This sequence belongs to the transglutaminase superfamily. Transglutaminase family. Ca(2+) is required as a cofactor. As to expression, expressed in foreskin keratinocytes.

It is found in the cytoplasm. The catalysed reaction is L-glutaminyl-[protein] + L-lysyl-[protein] = [protein]-L-lysyl-N(6)-5-L-glutamyl-[protein] + NH4(+). Functionally, catalyzes the cross-linking of proteins and the conjugation of polyamines to proteins. Contributes to the formation of the cornified cell envelope of keratinocytes. This chain is Protein-glutamine gamma-glutamyltransferase 5 (TGM5), found in Homo sapiens (Human).